A 438-amino-acid polypeptide reads, in one-letter code: GRAS family protein TF80 (438 aa).

One can recognise a GRAS domain in the interval 13-436; sequence LRYDSHGSNP…RPLFSVSAWK (424 aa). The interval 20–81 is leucine repeat I (LRI); sequence SNPMIPLIEC…YKIVKHLPGV (62 aa). The tract at residues 100–165 is VHIID; sequence QKYFYDLCPF…GGPPFLKITG (66 aa). A VHIID motif is present at residues 131–135; it reads VHIID. The segment at 175–207 is leucine repeat II (LRII); the sequence is QMSFHLTTEAGILDFPLQFNPIISKLEDVDFEN. Positions 216–359 are PFYRE; the sequence is VAISSVLQLH…SMLLGEQIKN (144 aa). The LXXLL motif signature appears at 224–228; sequence LHSLL. The segment at 362-436 is SAW; the sequence is TCEGVDRKER…RPLFSVSAWK (75 aa).

It belongs to the GRAS family. As to quaternary structure, interacts with RAM1.

The protein resides in the nucleus. The polypeptide is GRAS family protein TF80 (TF80) (Medicago truncatula (Barrel medic)).